Here is a 691-residue protein sequence, read N- to C-terminus: Ubiquitin-like domain-containing protein CIP73 (691 aa).

Positions Ile22 to Leu97 constitute a Ubiquitin-like domain. Disordered stretches follow at residues Ala92–Gly118, Thr176–Asp203, Arg264–Ser283, Ala432–Ala473, Ser499–Val554, Glu590–Val624, and His645–Glu691. Composition is skewed to polar residues over residues Pro104–Gly118, Leu178–Ser189, Ser273–Ser283, Thr446–Ser465, and Ser499–Glu523. Basic and acidic residues predominate over residues Thr525–Ala535. Positions Arg536 to Val554 are enriched in polar residues. Over residues Ser597–Ala617 the composition is skewed to low complexity.

In terms of assembly, interacts with CCAMK. Post-translationally, phosphorylated at the N-terminus by CCAMK. As to expression, highly epressed in roots. Expressed at very low levels in leaves and stems.

The protein localises to the nucleus. Involved in root nodulation. Required for root nodule organogenesis after infection by symbiotic rhizobia. Probably not involved in arbuscular mycorrhizal (AM) symbiosis. Acts downstream of CCAMK. This Lotus japonicus (Lotus corniculatus var. japonicus) protein is Ubiquitin-like domain-containing protein CIP73.